The sequence spans 745 residues: Protein transport protein SEC23 D (745 aa).

The Zn(2+) site is built by cysteine 53, cysteine 56, cysteine 73, and cysteine 76. Residues 53 to 76 form a zinc finger-like region; that stretch reads CENCYAYFNTYCELDQWAWNCSLC.

It belongs to the SEC23/SEC24 family. SEC24 subfamily. As to quaternary structure, component of the coat protein complex II (COPII), composed of at least five proteins: the Sec23/24 complex, the Sec13/31 complex and Sar1. As to expression, mostly expressed in closed floral bud, pollen and flowers, and, to a lower extent, in mature siliques, roots and leaf primordia.

The protein resides in the cytoplasmic vesicle. It is found in the COPII-coated vesicle membrane. The protein localises to the endoplasmic reticulum membrane. It localises to the membrane. Functionally, component of the coat protein complex II (COPII) which promotes the formation of transport vesicles from the endoplasmic reticulum (ER). The coat has two main functions, the physical deformation of the endoplasmic reticulum membrane into vesicles and the selection of cargo molecules. May contribute to COPII-coated vesicles formation and ER-Golgi vesicle transport. Together with SEC23A, essential for pollen wall development and exine patterning, probably by regulating endoplasmic reticulum (ER) export of lipids and proteins (e.g. sporopollenin) necessary for pollen wall formation. Also involved in plastid physiology in anther tapetal cells. The polypeptide is Protein transport protein SEC23 D (Arabidopsis thaliana (Mouse-ear cress)).